The primary structure comprises 402 residues: Tryptophan synthase beta chain (402 aa).

N6-(pyridoxal phosphate)lysine is present on Lys91.

The protein belongs to the TrpB family. As to quaternary structure, tetramer of two alpha and two beta chains. Requires pyridoxal 5'-phosphate as cofactor.

It carries out the reaction (1S,2R)-1-C-(indol-3-yl)glycerol 3-phosphate + L-serine = D-glyceraldehyde 3-phosphate + L-tryptophan + H2O. The protein operates within amino-acid biosynthesis; L-tryptophan biosynthesis; L-tryptophan from chorismate: step 5/5. The beta subunit is responsible for the synthesis of L-tryptophan from indole and L-serine. This chain is Tryptophan synthase beta chain, found in Streptococcus thermophilus (strain ATCC BAA-491 / LMD-9).